The sequence spans 400 residues: Aspartate/prephenate aminotransferase (400 aa).

Gly-39, Trp-125, and Asn-175 together coordinate L-aspartate. Lys-239 bears the N6-(pyridoxal phosphate)lysine mark. Residue Arg-375 participates in L-aspartate binding.

It belongs to the class-I pyridoxal-phosphate-dependent aminotransferase family. In terms of assembly, homodimer. Requires pyridoxal 5'-phosphate as cofactor.

The protein resides in the cytoplasm. The catalysed reaction is L-aspartate + 2-oxoglutarate = oxaloacetate + L-glutamate. It catalyses the reaction L-arogenate + 2-oxoglutarate = prephenate + L-glutamate. Catalyzes the reversible conversion of aspartate and 2-oxoglutarate to glutamate and oxaloacetate. Can also transaminate prephenate in the presence of glutamate. Required for symbiotic nitrogen fixation. This Rhizobium meliloti (strain 1021) (Ensifer meliloti) protein is Aspartate/prephenate aminotransferase.